Reading from the N-terminus, the 570-residue chain is MSCGNEFVETLKKIGYPKADILNGEDFDWLFEDVEDESFLKWFCGNVNEQNVLSEKELEAFSDLQRSGKPILEGTALDEVLRTCKTFDLKTCKLDDKEIQILEDEVQTLQKLNNSKIQRRNKYQLMVSETSYRFLALNAKQEEATKKLKQKQGFLNSVNTKLSNELQGLTEEVNNLMIFFRNSNLSERTNPMVFLSQFPLGKYISQEEQSTAALTLYTKKQFFQGMHEVVESSNEDNFQLLDIQTPSICDNEEILRERRLEMARLQMACICVQKQIIYLKTSNLSMKSSIKWAEENLNRLTNEVIDKENLDAEISSLNSEILKLEEQITHIKDKVLPAVVKEYAQLLNMPVVKGDFELQIAKQDYYTARQELVLNELIKQKASFELVQLSYEIELRKHWDTYRQLESLVQQLSQRNTVLCQHLAVLSDIPASEQLTSRTPIDTKDHSTHRLYELLEGDNKKKELFITHEHLEEVAEKLKQDVSVIQDQLAVSTQEHFFFLSKLNNDVDMLCDALYRGGNQLLLCDQELKEHFHQVESQLNELHHLLTDILADVKTKRRILATNKLHQVER.

Ser2 is subject to N-acetylserine. Coiled-coil stretches lie at residues 90-124 (KTCK…NKYQ), 154-178 (FLNS…NLMI), 284-336 (LSMK…DKVL), and 458-495 (DNKK…STQE).

Belongs to the HAUS3 family. As to quaternary structure, component of the HAUS augmin-like complex. The complex interacts with the gamma-tubulin ring complex and this interaction is required for spindle assembly. Interacts with EML3 (phosphorylated at 'Thr-882').

The protein resides in the cytoplasm. Its subcellular location is the cytoskeleton. It is found in the microtubule organizing center. It localises to the centrosome. The protein localises to the spindle. Functionally, contributes to mitotic spindle assembly, maintenance of centrosome integrity and completion of cytokinesis as part of the HAUS augmin-like complex. This chain is HAUS augmin-like complex subunit 3 (Haus3), found in Mus musculus (Mouse).